The primary structure comprises 1205 residues: A disintegrin and metalloproteinase with thrombospondin motifs 3 (1205 aa).

The N-terminal stretch at 1–20 (MVLLSLWLIAAALVEVRTSA) is a signal peptide. Positions 21-249 (DGQAGNEEMV…QLNETMRRRR (229 aa)) are excised as a propeptide. N-linked (GlcNAc...) asparagine glycans are attached at residues Asn83, Asn119, Asn242, and Asn345. Residues 256–460 (YNIEVLLGVD…HSYDCLLDDP (205 aa)) enclose the Peptidase M12B domain. 3 cysteine pairs are disulfide-bonded: Cys333–Cys382, Cys376–Cys455, and Cys415–Cys441. His398 provides a ligand contact to Zn(2+). Glu399 is a catalytic residue. Zn(2+)-binding residues include His402 and His408. The 81-residue stretch at 470–550 (ELPGINYSMD…MWKNANQQKQ (81 aa)) folds into the Disintegrin domain. N-linked (GlcNAc...) asparagine glycosylation is present at Asn475. Intrachain disulfides connect Cys482–Cys507, Cys493–Cys516, Cys502–Cys535, Cys529–Cys540, Cys563–Cys600, Cys567–Cys605, and Cys578–Cys590. The region spanning 551 to 606 (DGNWGSWTKFGSCSRTCGTGVRFRTRQCNNPMPINGGQDCPGVNFEYQLCNTEECQ) is the TSP type-1 1 domain. Positions 713-844 (RTVKGTFTRT…NSNNVIQEEL (132 aa)) are spacer. Asn814 carries N-linked (GlcNAc...) asparagine glycosylation. TSP type-1 domains lie at 845–905 (DTFE…QECT), 906–965 (HPLW…NRVP), and 966–1014 (CPAQ…QLPP). Residue Asn942 is glycosylated (N-linked (GlcNAc...) asparagine). Intrachain disulfides connect Cys978–Cys1010, Cys982–Cys1015, and Cys993–Cys999. Residues 1015–1054 (CNDEPCLGDKSIFCQMEVLARYCSIPGYNKLCCESCSKRS) form the PLAC domain. Residues 1174 to 1205 (DSIGASSQARTSKKDGKIIDNRRPTRSSTLER) form a disordered region. Residues 1185–1205 (SKKDGKIIDNRRPTRSSTLER) are compositionally biased toward basic and acidic residues.

The cofactor is Zn(2+). Post-translationally, the precursor is cleaved by a furin endopeptidase. In terms of processing, glycosylated. Can be O-fucosylated by POFUT2 on a serine or a threonine residue found within the consensus sequence C1-X(2)-(S/T)-C2-G of the TSP type-1 repeat domains where C1 and C2 are the first and second cysteine residue of the repeat, respectively. Fucosylated repeats can then be further glycosylated by the addition of a beta-1,3-glucose residue by the glucosyltransferase, B3GALTL. Fucosylation mediates the efficient secretion of ADAMTS family members. Can also be C-glycosylated with one or two mannose molecules on tryptophan residues within the consensus sequence W-X-X-W of the TPRs, and N-glycosylated. These other glycosylations can also facilitate secretion. Found in cartilage and skin.

The protein localises to the secreted. It is found in the extracellular space. Its subcellular location is the extracellular matrix. In terms of biological role, cleaves the propeptides of type II collagen prior to fibril assembly. Does not act on types I and III collagens. The sequence is that of A disintegrin and metalloproteinase with thrombospondin motifs 3 (ADAMTS3) from Homo sapiens (Human).